A 346-amino-acid chain; its full sequence is uncharacterized protein (346 aa).

The segment at 321 to 346 (TPWGTHSVAGVGPPPYARSGPASATT) is disordered.

This is an uncharacterized protein from Mycobacterium tuberculosis (strain CDC 1551 / Oshkosh).